A 272-amino-acid polypeptide reads, in one-letter code: Shikimate dehydrogenase (NADP(+)) (272 aa).

Shikimate is bound by residues 14-16 (SKS) and threonine 61. The active-site Proton acceptor is lysine 65. Residue glutamate 77 coordinates NADP(+). Positions 86 and 102 each coordinate shikimate. NADP(+) is bound by residues 126–130 (GAGGA), 149–154 (NRTQEK), and methionine 213. Tyrosine 215 contacts shikimate. An NADP(+)-binding site is contributed by glycine 237.

This sequence belongs to the shikimate dehydrogenase family. In terms of assembly, homodimer.

It carries out the reaction shikimate + NADP(+) = 3-dehydroshikimate + NADPH + H(+). It functions in the pathway metabolic intermediate biosynthesis; chorismate biosynthesis; chorismate from D-erythrose 4-phosphate and phosphoenolpyruvate: step 4/7. Involved in the biosynthesis of the chorismate, which leads to the biosynthesis of aromatic amino acids. Catalyzes the reversible NADPH linked reduction of 3-dehydroshikimate (DHSA) to yield shikimate (SA). In Erwinia tasmaniensis (strain DSM 17950 / CFBP 7177 / CIP 109463 / NCPPB 4357 / Et1/99), this protein is Shikimate dehydrogenase (NADP(+)).